The following is an 84-amino-acid chain: Alpha-mammal toxin Aah3 (84 aa).

The N-terminal stretch at 1–19 is a signal peptide; it reads MNYLVMISLALLLMTGVES. The LCN-type CS-alpha/beta domain maps to 21–82; the sequence is RDGYIVDSKN…PIKDPSYKCH (62 aa). 4 cysteine pairs are disulfide-bonded: cysteine 31–cysteine 81, cysteine 35–cysteine 53, cysteine 39–cysteine 63, and cysteine 43–cysteine 65. Residue arginine 84 is a propeptide, removed by a carboxypeptidase.

The protein belongs to the long (4 C-C) scorpion toxin superfamily. Sodium channel inhibitor family. Alpha subfamily. In terms of tissue distribution, expressed by the venom gland.

It is found in the secreted. Alpha toxins bind voltage-independently at site-3 of sodium channels (Nav) and inhibit the inactivation of the activated channels, thereby blocking neuronal transmission. The polypeptide is Alpha-mammal toxin Aah3 (Androctonus australis (Sahara scorpion)).